The following is a 137-amino-acid chain: Putative pre-16S rRNA nuclease (137 aa).

This sequence belongs to the YqgF nuclease family.

It is found in the cytoplasm. Functionally, could be a nuclease involved in processing of the 5'-end of pre-16S rRNA. This is Putative pre-16S rRNA nuclease from Clostridium botulinum (strain Eklund 17B / Type B).